Consider the following 425-residue polypeptide: Histone-binding protein RBBP4-B (425 aa).

Ala2 is subject to N-acetylalanine. WD repeat units follow at residues 32–125 (YDLV…NHEG), 126–175 (EVNR…RLRG), 176–223 (HQKE…KTIF), 225–270 (GHTA…HSVD), 271–314 (AHTA…HSFE), 315–371 (SHKD…FIHG), and 372–404 (GHTA…VWQM).

This sequence belongs to the WD repeat RBAP46/RBAP48/MSI1 family. In terms of assembly, binds directly to histone H4, probably via helix 1 of the histone fold, a region that is not accessible when histone H4 is in chromatin. Probably forms a large corepressor complex that contains ncor1, sin3a, hdac1-A and/or hdac1-B, hdac2, rbbp4-A and/or rbbp4-B and possibly rbbp7.

The protein resides in the nucleus. Its subcellular location is the chromosome. It is found in the telomere. Functionally, core histone-binding subunit that may target chromatin assembly factors, chromatin remodeling factors and histone deacetylases to their histone substrates in a manner that is regulated by nucleosomal DNA. Component of several complexes which regulate chromatin metabolism. This is Histone-binding protein RBBP4-B (rbbp4-b) from Xenopus laevis (African clawed frog).